A 155-amino-acid chain; its full sequence is Deoxyuridine 5'-triphosphate nucleotidohydrolase (155 aa).

Substrate contacts are provided by residues 74-76 (RSG), N87, and 91-93 (LID).

It belongs to the dUTPase family. The cofactor is Mg(2+).

The catalysed reaction is dUTP + H2O = dUMP + diphosphate + H(+). It functions in the pathway pyrimidine metabolism; dUMP biosynthesis; dUMP from dCTP (dUTP route): step 2/2. This enzyme is involved in nucleotide metabolism: it produces dUMP, the immediate precursor of thymidine nucleotides and it decreases the intracellular concentration of dUTP so that uracil cannot be incorporated into DNA. The polypeptide is Deoxyuridine 5'-triphosphate nucleotidohydrolase (Xanthomonas oryzae pv. oryzae (strain MAFF 311018)).